Here is a 193-residue protein sequence, read N- to C-terminus: Immunogenic protein MPB70 (193 aa).

The signal sequence occupies residues 1–30 (MKVKNTIAATSFAAAGLAALAVAVSPPAAA). The 133-residue stretch at 57 to 189 (QDPVAVAASN…ATVYMIDSVL (133 aa)) folds into the FAS1 domain.

As to quaternary structure, generally found as a monomer; homodimer in culture fluids.

The protein localises to the secreted. The protein is Immunogenic protein MPB70 (mpb70) of Mycobacterium bovis (strain ATCC BAA-935 / AF2122/97).